A 430-amino-acid polypeptide reads, in one-letter code: Mucorpepsin (430 aa).

An N-terminal signal peptide occupies residues 1-22 (MLFSQITSAILLTAASLSLTTA). Positions 23 to 69 (RPVSKQSESKDKLLALPLTSVSRKFSQTKFGQQQLAEKLAGLKPFSE) are cleaved as a propeptide — activation peptide. In terms of domain architecture, Peptidase A1 spans 89–421 (YAIPVSIGTP…DFGNNRIGFA (333 aa)). Residue Asp107 is part of the active site. The cysteines at positions 120 and 126 are disulfide-linked. N-linked (GlcNAc...) asparagine glycosylation is found at Asn148 and Asn257. Asp306 is an active-site residue. Cys341 and Cys385 form a disulfide bridge.

This sequence belongs to the peptidase A1 family.

It carries out the reaction Hydrolysis of proteins, favoring hydrophobic residues at P1 and P1'. Clots milk. Does not accept Lys at P1, and hence does not activate trypsinogen.. Functionally, this enzyme, capable of clotting milk is frequently used for cheese production. The sequence is that of Mucorpepsin from Rhizomucor miehei.